A 294-amino-acid chain; its full sequence is 4-hydroxybenzoate octaprenyltransferase (294 aa).

Helical transmembrane passes span 37 to 57 (LWAM…WIFF), 101 to 121 (LAVA…LNAL), 142 to 162 (FFAI…PMAF), 169 to 189 (VPFV…AYDT), 219 to 239 (IMIC…LLGL), 241 to 261 (WPYY…YTLI), and 271 to 293 (AAFR…AYLL).

Belongs to the UbiA prenyltransferase family. It depends on Mg(2+) as a cofactor.

Its subcellular location is the cell inner membrane. It carries out the reaction all-trans-octaprenyl diphosphate + 4-hydroxybenzoate = 4-hydroxy-3-(all-trans-octaprenyl)benzoate + diphosphate. It functions in the pathway cofactor biosynthesis; ubiquinone biosynthesis. Catalyzes the prenylation of para-hydroxybenzoate (PHB) with an all-trans polyprenyl group. Mediates the second step in the final reaction sequence of ubiquinone-8 (UQ-8) biosynthesis, which is the condensation of the polyisoprenoid side chain with PHB, generating the first membrane-bound Q intermediate 3-octaprenyl-4-hydroxybenzoate. The sequence is that of 4-hydroxybenzoate octaprenyltransferase from Cupriavidus metallidurans (strain ATCC 43123 / DSM 2839 / NBRC 102507 / CH34) (Ralstonia metallidurans).